The following is a 215-amino-acid chain: Vacuolar ATPase assembly integral membrane protein VPH2 (215 aa).

The Cytoplasmic portion of the chain corresponds to 1–134; it reads MFEIKLNDRI…SQINKQIKEQ (134 aa). A helical membrane pass occupies residues 135–155; it reads VTTVFNVLVSVISVVVAIWYW. Topologically, residues 156–167 are lumenal; it reads TGSSTNFPVHVR. A helical transmembrane segment spans residues 168 to 186; it reads LLLCLFFGILVLVADVVVY. At 187 to 215 the chain is on the cytoplasmic side; it reads NSYLKKLEEAKVKEKTKVEKKKVLSKITL.

The protein resides in the endoplasmic reticulum membrane. Its function is as follows. Required for vacuolar ATPase assembly. This chain is Vacuolar ATPase assembly integral membrane protein VPH2 (VPH2), found in Saccharomyces cerevisiae (strain ATCC 204508 / S288c) (Baker's yeast).